Here is a 219-residue protein sequence, read N- to C-terminus: MPLSHTTWAPYINAKLTPEQINNIKQFLDVQYQEQSIFPPKEKVFAALSMTSLDHTKVVIMGQDPYHGLGQAQGLSFSVPDAVPAPPSLQNILKELATDIGPRASHDLTSWAKQGVLLLNAVLTVPEGQANAHAGLVWEPLTDAIIQAVSDAGEPTVFILWGKFAQSKRRYIDESKHLVLTAAHPSPLSAYRGFFGSHPFSKANQFLTQNGRDSIHWLE.

Residue Asp-64 is the Proton acceptor of the active site.

The protein belongs to the uracil-DNA glycosylase (UDG) superfamily. UNG family.

The protein resides in the cytoplasm. It catalyses the reaction Hydrolyzes single-stranded DNA or mismatched double-stranded DNA and polynucleotides, releasing free uracil.. Its function is as follows. Excises uracil residues from the DNA which can arise as a result of misincorporation of dUMP residues by DNA polymerase or due to deamination of cytosine. The sequence is that of Uracil-DNA glycosylase from Leuconostoc citreum (strain KM20).